The primary structure comprises 557 residues: Glutamine--tRNA ligase (557 aa).

Residues 42 to 52 (PEPNGYLHIGH) carry the 'HIGH' region motif. ATP-binding positions include 43–45 (EPN) and 49–55 (HIGHAKS). Residues aspartate 75 and tyrosine 220 each coordinate L-glutamine. Residues threonine 239 and 270–271 (RL) contribute to the ATP site. The 'KMSKS' region signature appears at 277 to 281 (LTSKR).

Belongs to the class-I aminoacyl-tRNA synthetase family. In terms of assembly, monomer.

It is found in the cytoplasm. The catalysed reaction is tRNA(Gln) + L-glutamine + ATP = L-glutaminyl-tRNA(Gln) + AMP + diphosphate. The chain is Glutamine--tRNA ligase from Haemophilus influenzae (strain 86-028NP).